Here is a 132-residue protein sequence, read N- to C-terminus: Small ribosomal subunit protein uS12 (132 aa).

3-methylthioaspartic acid is present on aspartate 89. The segment at 101-132 (TLDASGAAGPSSTNKATRNRKRSKYGVKRPKA) is disordered. Basic residues predominate over residues 117 to 132 (TRNRKRSKYGVKRPKA).

The protein belongs to the universal ribosomal protein uS12 family. As to quaternary structure, part of the 30S ribosomal subunit. Contacts proteins S8 and S17. May interact with IF1 in the 30S initiation complex.

Its function is as follows. With S4 and S5 plays an important role in translational accuracy. Functionally, interacts with and stabilizes bases of the 16S rRNA that are involved in tRNA selection in the A site and with the mRNA backbone. Located at the interface of the 30S and 50S subunits, it traverses the body of the 30S subunit contacting proteins on the other side and probably holding the rRNA structure together. The combined cluster of proteins S8, S12 and S17 appears to hold together the shoulder and platform of the 30S subunit. The polypeptide is Small ribosomal subunit protein uS12 (Sorangium cellulosum (strain So ce56) (Polyangium cellulosum (strain So ce56))).